We begin with the raw amino-acid sequence, 359 residues long: MVKLFIGNLPREATEQEIRSLFEQYGKVLECDIIKNYGFVHIEDKTAAEDAIRNLHHYKLHGVNINVEASKNKSKASTKLHVGNISPTCTNQELRAKFEEYGPVIECDIVKDYAFVHMERAEDAVEAIRGLDNTEFQGKRMHVQLSTSRLRTAPGMGDQSGCYRCGKEGHWSKECPVDRTGRVADFTEQYNEQYGAVRTPYTMGYGESMYYNDAYGALDYYKRYRVRSYEAVAAAAAASAYNYAEQTMSHLPQVQSTTVTSHLNSTSVDPYDRHLLPNSGAAATSAAMAAAAATTSSYYGRDRSPLRRAAAMLPTVGEGYGYGPESELSQASAATRNSLYDMARYEREQYVDRARYSAF.

RRM domains lie at 2–72 and 78–148; these read VKLF…ASKN and TKLH…LSTS. Residues 160–177 form a CCHC-type zinc finger; sequence SGCYRCGKEGHWSKECPV. The interaction with TNPO3 stretch occupies residues 196-359; the sequence is AVRTPYTMGY…YVDRARYSAF (164 aa).

In terms of assembly, interacts with TNPO3, which may mediate nuclear import of the protein. In terms of tissue distribution, expressed in liver and kidney (at protein level). Ubiquitously expressed.

The protein localises to the nucleus. It is found in the nucleolus. Its function is as follows. Required for the translational activation of PER1 mRNA in response to circadian clock. Binds directly to the 3'-UTR of the PER1 mRNA. In Homo sapiens (Human), this protein is RNA-binding protein 4B (RBM4B).